Consider the following 502-residue polypeptide: RNA polymerase sigma factor sigA (502 aa).

A chloroplast-targeting transit peptide spans 1–23 (MATAAVIGLNTGKRLLSSSFYHS). Residues 57–71 (YSPSFPSSNRHTQSA) show a composition bias toward polar residues. The interval 57–92 (YSPSFPSSNRHTQSAKALKESVDVASTEKPWLPNGT) is disordered. Residue Thr-170 is modified to Phosphothreonine. A Polymerase core binding motif is present at residues 287–300 (DLVQGGLIGLLRGI). The H-T-H motif DNA-binding region spans 461 to 480 (WEDISKRIGLSRERVRQVGL).

It belongs to the sigma-70 factor family. As to quaternary structure, interacts with SIB1 in chloroplast. Binds to CSK. In terms of processing, the phosphorylation of Thr-170 mediated by oxidative conditions of plastoquinone (PQ) changes the promoter specificity, selectively inhibiting the transcription of the psaA gene, which encodes a PS-I protein. Phosphorylation of the holoenzyme occurs in the dark. This phosphorylation in response to plastoquinone redox state modification is mediated by CSK. As to expression, highly expressed in leaves, and to a lesser extent in roots. Expressed in old seedlings (8 days), cotyledons, hypocotyls, leaves, sepals and siliques.

Its subcellular location is the plastid. It localises to the chloroplast. Functionally, essential protein. Sigma factors are initiation factors that promote the attachment of plastid-encoded RNA polymerase (PEP) to specific initiation sites and are then released. Controls the transcription of the psaA gene and thus modulates photosystem stoichiometry. Thereby maintains a harmonious electron flow and photosynthetic efficiency. The chain is RNA polymerase sigma factor sigA (SIGA) from Arabidopsis thaliana (Mouse-ear cress).